The following is a 131-amino-acid chain: Cystatin-like cysteine protease inhibitor EPIC3 (131 aa).

A signal peptide spans 1 to 22; it reads MAFTRSIALFAGLALAASSAQG. Residue Asn33 is glycosylated (N-linked (GlcNAc...) asparagine). Positions 71–75 match the Secondary area of contact motif; that stretch reads QTVAG.

It belongs to the cystatin family.

It is found in the secreted. Secreted effector that interacts with and inhibits host apoplastic pathogenesis-related papain-like cysteine proteases. Inhibition of host proteases by a pathogen extracellular protease inhibitor forms a specific type of defense-counterdefense mechanism between plants and microbial pathogens. The chain is Cystatin-like cysteine protease inhibitor EPIC3 from Phytophthora infestans (strain T30-4) (Potato late blight agent).